Here is a 725-residue protein sequence, read N- to C-terminus: 1,4-alpha-glucan branching enzyme GlgB (725 aa).

Asp403 serves as the catalytic Nucleophile. Glu456 serves as the catalytic Proton donor.

It belongs to the glycosyl hydrolase 13 family. GlgB subfamily. Monomer.

It catalyses the reaction Transfers a segment of a (1-&gt;4)-alpha-D-glucan chain to a primary hydroxy group in a similar glucan chain.. Its pathway is glycan biosynthesis; glycogen biosynthesis. Functionally, catalyzes the formation of the alpha-1,6-glucosidic linkages in glycogen by scission of a 1,4-alpha-linked oligosaccharide from growing alpha-1,4-glucan chains and the subsequent attachment of the oligosaccharide to the alpha-1,6 position. This chain is 1,4-alpha-glucan branching enzyme GlgB, found in Pectobacterium atrosepticum (strain SCRI 1043 / ATCC BAA-672) (Erwinia carotovora subsp. atroseptica).